The sequence spans 68 residues: U4-agatoxin-Ao1a (68 aa).

The signal sequence occupies residues 1–25 (MKKSTVIVLSLAAFVLLSVMQFSAA). Positions 26-36 (EDIKMEVEEQR) are excised as a propeptide. Intrachain disulfides connect cysteine 39–cysteine 52, cysteine 46–cysteine 57, cysteine 51–cysteine 66, and cysteine 59–cysteine 64.

The protein belongs to the neurotoxin 33 family. Expressed by the venom gland.

Its subcellular location is the secreted. This chain is U4-agatoxin-Ao1a, found in Agelena orientalis (Funnel-web spider).